Consider the following 270-residue polypeptide: 3-methyl-2-oxobutanoate hydroxymethyltransferase (270 aa).

The Mg(2+) site is built by Asp42 and Asp86. 3-methyl-2-oxobutanoate contacts are provided by residues 42–43 (DS), Asp86, and Lys116. Glu118 is a Mg(2+) binding site. The active-site Proton acceptor is the Glu185.

The protein belongs to the PanB family. In terms of assembly, homodecamer; pentamer of dimers. It depends on Mg(2+) as a cofactor.

The protein resides in the cytoplasm. It carries out the reaction 3-methyl-2-oxobutanoate + (6R)-5,10-methylene-5,6,7,8-tetrahydrofolate + H2O = 2-dehydropantoate + (6S)-5,6,7,8-tetrahydrofolate. It participates in cofactor biosynthesis; (R)-pantothenate biosynthesis; (R)-pantoate from 3-methyl-2-oxobutanoate: step 1/2. Its function is as follows. Catalyzes the reversible reaction in which hydroxymethyl group from 5,10-methylenetetrahydrofolate is transferred onto alpha-ketoisovalerate to form ketopantoate. The chain is 3-methyl-2-oxobutanoate hydroxymethyltransferase from Synechococcus sp. (strain CC9902).